The sequence spans 46 residues: Light-harvesting protein B-800/850 beta 2 chain (46 aa).

At Ala-2–Phe-25 the chain is on the cytoplasmic side. The a bacteriochlorophyll site is built by His-18 and His-36. The helical transmembrane segment at Ser-26–Phe-46 threads the bilayer.

It belongs to the antenna complex beta subunit family. As to quaternary structure, the core complex is formed by different alpha and beta chains, binding bacteriochlorophyll molecules, and arranged most probably in tetrameric structures disposed around the reaction center.

It is found in the cell inner membrane. In terms of biological role, antenna complexes are light-harvesting systems, which transfer the excitation energy to the reaction centers. This Magnetospirillum molischianum (Rhodospirillum molischianum) protein is Light-harvesting protein B-800/850 beta 2 chain (B2).